Here is a 206-residue protein sequence, read N- to C-terminus: Platelet glycoprotein Ib beta chain (206 aa).

Residues 1 to 25 (MGSGPRGALSLLLLLLAPPSRPAAG) form the signal peptide. Cystine bridges form between Cys-26-Cys-32 and Cys-30-Cys-39. The region spanning 27-55 (PAPCSCAGTLVDCGRRGLTWASLPTAFPV) is the LRRNT domain. Topologically, residues 27-147 (PAPCSCAGTL…RAACAPGPLC (121 aa)) are extracellular. An LRR repeat occupies 60-83 (LVLTGNNLTALPPGLLDALPALRT). N-linked (GlcNAc...) asparagine glycosylation occurs at Asn-66. Positions 89 to 143 (NPWRCDCRLVPLRAWLAGRPERAPYRDLRCVAPPALRGRLLPYLAEDELRAACAP) constitute an LRRCT domain. 2 cysteine pairs are disulfide-bonded: Cys-93–Cys-118 and Cys-95–Cys-141. Residues 148–172 (WGALAAQLALLGLGLLHALLLVLLL) traverse the membrane as a helical segment. Residues 173 to 206 (CRLRRLRARARARAAARLSLTDPLVAERAGTDES) are Cytoplasmic-facing. Position 191 is a phosphoserine; by PKA (Ser-191). Phosphothreonine is present on Thr-193.

Two GP-Ib beta are disulfide-linked to one GP-Ib alpha. GP-IX is complexed with the GP-Ib heterodimer via a non covalent linkage. Interacts with TRAF4. Expressed in heart and brain.

Its subcellular location is the membrane. Functionally, gp-Ib, a surface membrane protein of platelets, participates in the formation of platelet plugs by binding to von Willebrand factor, which is already bound to the subendothelium. The protein is Platelet glycoprotein Ib beta chain (GP1BB) of Homo sapiens (Human).